Consider the following 180-residue polypeptide: Stathmin-3 (180 aa).

2 S-palmitoyl cysteine lipidation sites follow: cysteine 22 and cysteine 24. The region spanning 38 to 180 (GDMEVKQLDK…NKEQREEMSG (143 aa)) is the SLD domain. Phosphoserine is present on residues serine 50, serine 60, serine 65, serine 68, serine 72, serine 73, and serine 81. The segment at 58-81 (LKSPSDLSPESPVLSSPPKRKDAS) is disordered. The span at 60–74 (SPSDLSPESPVLSSP) shows a compositional bias: low complexity. Residues 75 to 179 (PKRKDASLEE…RNKEQREEMS (105 aa)) adopt a coiled-coil conformation.

It belongs to the stathmin family. Interacts with STAT3. Interacts with CLU (secreted form); this interaction may act as an important modulator during neuronal differentiation. In terms of processing, N-terminal palmitoylation promotes specific anchoring to the cytosolic leaflet of Golgi membranes and subsequent vesicular trafficking along dendrites and axons. Neuronal Stathmins are substrates for palmitoyltransferases ZDHHC3, ZDHHC7 and ZDHHC15. In terms of tissue distribution, neuron specific.

It localises to the golgi apparatus. It is found in the cell projection. Its subcellular location is the growth cone. The protein localises to the axon. The protein resides in the cytoplasm. It localises to the cytosol. Exhibits microtubule-destabilizing activity, which is antagonized by STAT3. The chain is Stathmin-3 (Stmn3) from Rattus norvegicus (Rat).